Here is a 207-residue protein sequence, read N- to C-terminus: Octanoyltransferase (207 aa).

Residues 27-203 (ADTEDELWVV…HLETQLTPKA (177 aa)) enclose the BPL/LPL catalytic domain. Residues 66-73 (RGGQITYH), 133-135 (SLG), and 146-148 (GLA) contribute to the substrate site. Residue Cys-164 is the Acyl-thioester intermediate of the active site.

This sequence belongs to the LipB family.

The protein resides in the cytoplasm. The catalysed reaction is octanoyl-[ACP] + L-lysyl-[protein] = N(6)-octanoyl-L-lysyl-[protein] + holo-[ACP] + H(+). Its pathway is protein modification; protein lipoylation via endogenous pathway; protein N(6)-(lipoyl)lysine from octanoyl-[acyl-carrier-protein]: step 1/2. In terms of biological role, catalyzes the transfer of endogenously produced octanoic acid from octanoyl-acyl-carrier-protein onto the lipoyl domains of lipoate-dependent enzymes. Lipoyl-ACP can also act as a substrate although octanoyl-ACP is likely to be the physiological substrate. In Neisseria gonorrhoeae (strain ATCC 700825 / FA 1090), this protein is Octanoyltransferase.